The sequence spans 568 residues: Proline--tRNA ligase (568 aa).

It belongs to the class-II aminoacyl-tRNA synthetase family. ProS type 1 subfamily. In terms of assembly, homodimer.

It is found in the cytoplasm. It carries out the reaction tRNA(Pro) + L-proline + ATP = L-prolyl-tRNA(Pro) + AMP + diphosphate. Its function is as follows. Catalyzes the attachment of proline to tRNA(Pro) in a two-step reaction: proline is first activated by ATP to form Pro-AMP and then transferred to the acceptor end of tRNA(Pro). As ProRS can inadvertently accommodate and process non-cognate amino acids such as alanine and cysteine, to avoid such errors it has two additional distinct editing activities against alanine. One activity is designated as 'pretransfer' editing and involves the tRNA(Pro)-independent hydrolysis of activated Ala-AMP. The other activity is designated 'posttransfer' editing and involves deacylation of mischarged Ala-tRNA(Pro). The misacylated Cys-tRNA(Pro) is not edited by ProRS. In Alkalilimnicola ehrlichii (strain ATCC BAA-1101 / DSM 17681 / MLHE-1), this protein is Proline--tRNA ligase.